Here is a 159-residue protein sequence, read N- to C-terminus: Phosphopantetheine adenylyltransferase (159 aa).

Thr10 is a substrate binding site. ATP-binding positions include 10 to 11 and His18; that span reads TF. Lys42, Met74, and Arg88 together coordinate substrate. ATP-binding positions include 89 to 91, Glu99, and 124 to 130; these read GLR and WSFISSS.

This sequence belongs to the bacterial CoaD family. As to quaternary structure, homohexamer. It depends on Mg(2+) as a cofactor.

Its subcellular location is the cytoplasm. It catalyses the reaction (R)-4'-phosphopantetheine + ATP + H(+) = 3'-dephospho-CoA + diphosphate. Its pathway is cofactor biosynthesis; coenzyme A biosynthesis; CoA from (R)-pantothenate: step 4/5. Functionally, reversibly transfers an adenylyl group from ATP to 4'-phosphopantetheine, yielding dephospho-CoA (dPCoA) and pyrophosphate. This chain is Phosphopantetheine adenylyltransferase, found in Salmonella dublin (strain CT_02021853).